Reading from the N-terminus, the 296-residue chain is Myozenin-1 (296 aa).

S82 carries the phosphoserine modification. Gly residues-rich tracts occupy residues 105–117 and 134–170; these read FSYG…GQAG and SGFG…QAGG. The interval 105 to 172 is disordered; the sequence is FSYGKGSSGG…GSGDQAGGDG (68 aa).

The protein belongs to the myozenin family. In terms of assembly, interacts with ACTN2, ACTN3, FLNA, FLNB, FLNC, LDB3, PPP3CA and TCAP. Interacts via its C-terminal region with MYOT. In terms of tissue distribution, expressed primarily in skeletal muscle and specifically enriched in the gastrocnemius, which is composed predominantly of fast-twitch muscle fibers. Detected at lower levels in heart.

The protein localises to the nucleus. It is found in the cell projection. Its subcellular location is the pseudopodium. In terms of biological role, myozenins may serve as intracellular binding proteins involved in linking Z-disk proteins such as alpha-actinin, gamma-filamin, TCAP/telethonin, LDB3/ZASP and localizing calcineurin signaling to the sarcomere. Plays an important role in the modulation of calcineurin signaling. May play a role in myofibrillogenesis. The protein is Myozenin-1 of Mus musculus (Mouse).